We begin with the raw amino-acid sequence, 144 residues long: MRLNTLSPAEGAKHAPKRLGRGIGSGLGKTGGRGHKGQKSRSGGGVRRGFEGGQMPLYRRLPKFGFTSRKAMITSEVRLSDLAKVEGDVVDLNTLKAANVIGIQIEFAKVILSGEVARPVTIRGLRVTKGARAAIEAAGGKIEE.

The disordered stretch occupies residues 1-53 (MRLNTLSPAEGAKHAPKRLGRGIGSGLGKTGGRGHKGQKSRSGGGVRRGFEGG). Residues 21-31 (RGIGSGLGKTG) show a composition bias toward gly residues.

This sequence belongs to the universal ribosomal protein uL15 family. As to quaternary structure, part of the 50S ribosomal subunit.

In terms of biological role, binds to the 23S rRNA. The sequence is that of Large ribosomal subunit protein uL15 from Pectobacterium carotovorum subsp. carotovorum (strain PC1).